Consider the following 41-residue polypeptide: MSNTTTGRIPLWFVGMVGGLAALGLLAIFFYGSYVGLGSSL.

The helical transmembrane segment at Ile9–Phe29 threads the bilayer.

Belongs to the PsbJ family. PSII is composed of 1 copy each of membrane proteins PsbA, PsbB, PsbC, PsbD, PsbE, PsbF, PsbH, PsbI, PsbJ, PsbK, PsbL, PsbM, PsbT, PsbX, PsbY, PsbZ, Psb30/Ycf12, at least 3 peripheral proteins of the oxygen-evolving complex and a large number of cofactors. It forms dimeric complexes.

It is found in the plastid. Its subcellular location is the chloroplast thylakoid membrane. One of the components of the core complex of photosystem II (PSII). PSII is a light-driven water:plastoquinone oxidoreductase that uses light energy to abstract electrons from H(2)O, generating O(2) and a proton gradient subsequently used for ATP formation. It consists of a core antenna complex that captures photons, and an electron transfer chain that converts photonic excitation into a charge separation. The sequence is that of Photosystem II reaction center protein J from Ostreococcus tauri.